Consider the following 353-residue polypeptide: DNA polymerase IV (353 aa).

Residues 14–198 form the UmuC domain; that stretch reads IIHIDMDAFF…MDISKFHGVG (185 aa). Asp-18 and Asp-116 together coordinate Mg(2+). Residue Glu-117 is part of the active site.

Belongs to the DNA polymerase type-Y family. As to quaternary structure, monomer. Requires Mg(2+) as cofactor.

It is found in the cytoplasm. The enzyme catalyses DNA(n) + a 2'-deoxyribonucleoside 5'-triphosphate = DNA(n+1) + diphosphate. Its function is as follows. Poorly processive, error-prone DNA polymerase involved in untargeted mutagenesis. Copies undamaged DNA at stalled replication forks, which arise in vivo from mismatched or misaligned primer ends. These misaligned primers can be extended by PolIV. Exhibits no 3'-5' exonuclease (proofreading) activity. May be involved in translesional synthesis, in conjunction with the beta clamp from PolIII. This Streptococcus pneumoniae serotype 4 (strain ATCC BAA-334 / TIGR4) protein is DNA polymerase IV.